The chain runs to 102 residues: MIPGEIIPAAGLPLDANTGLETKVLTVANTGDRPIQVGSHYHFFETNEALEFDRDATRGFRLNIPAGTAVRFEAGDTKRVELVALAGAREVYGLNARVNGKL.

This sequence belongs to the urease beta subunit family. In terms of assembly, heterotrimer of UreA (gamma), UreB (beta) and UreC (alpha) subunits. Three heterotrimers associate to form the active enzyme.

The protein resides in the cytoplasm. The catalysed reaction is urea + 2 H2O + H(+) = hydrogencarbonate + 2 NH4(+). Its pathway is nitrogen metabolism; urea degradation; CO(2) and NH(3) from urea (urease route): step 1/1. This Opitutus terrae (strain DSM 11246 / JCM 15787 / PB90-1) protein is Urease subunit beta.